Reading from the N-terminus, the 537-residue chain is MSRTGMPVINFINFNQTGTCISMGTSEGLKIFNCDPFGRFYSDEDGGCGIVEMLFSTSLLAVVGIGDNPSMSPRRLRILNTKRHSVICEVTFPTTILAVKMNRSRLVVLLQEQIYIYDINSMRLLYTIETSSNPRGLISMSPSLENNYLAYPSPPKVINSGIKSNANTNNIGISARSSIAEGGSEYLDKGTEPLTDSSKAGADLNSVKASTETTISPGKEHSAGSGLNATSSSGTVKNGDVIFFNLQTLQPTMVIEAHKGEIAALALSKDGTLLATASEKGTIIRVFSVETCTKVYQFRRGTYPTRIYSLNFSDDNEFLAASSSNKTVHIFKLGKPNAENSSAAATNSDDDEGEADSDDGADDDGVGDSDDTRSTVSIESFDNGSHQTREPIVDSSRKTVGRMIRKSSQNLSRKAAKALGSYFPKKVTSILEPRRHFASLKIPIESGSNLKTICTIGEPLTLDISDYPELFSGSRTMAQSASISANSSDSSLTRNSNFVKMIPIRVVSSEGYMYNYVLDPERGGDCLLLSQYPLLMD.

Residues 184 to 230 (SEYLDKGTEPLTDSSKAGADLNSVKASTETTISPGKEHSAGSGLNAT) are disordered. A compositionally biased stretch (polar residues) spans 207-216 (VKASTETTIS). WD repeat units follow at residues 257-297 (AHKG…KVYQ) and 302-341 (TYPT…AENS). A L/FRRG motif motif is present at residues 298–302 (FRRGT). Residues 338-347 (AENSSAAATN) show a composition bias toward low complexity. Residues 338 to 411 (AENSSAAATN…RMIRKSSQNL (74 aa)) form a disordered region. Over residues 348–369 (SDDDEGEADSDDGADDDGVGDS) the composition is skewed to acidic residues. Over residues 374-386 (STVSIESFDNGSH) the composition is skewed to polar residues. The segment covering 387-397 (QTREPIVDSSR) has biased composition (basic and acidic residues).

The protein belongs to the WD repeat PROPPIN family. In terms of assembly, component of the PI(3,5)P2 regulatory complex.

Its subcellular location is the preautophagosomal structure membrane. It localises to the vacuole membrane. The protein localises to the endosome membrane. Its function is as follows. The PI(3,5)P2 regulatory complex regulates both the synthesis and turnover of phosphatidylinositol 3,5-bisphosphate (PtdIns(3,5)P2). Necessary for proper vacuole morphology. Plays an important role in osmotically-induced vacuole fragmentation. Required for cytoplasm to vacuole transport (Cvt) vesicle formation, pexophagy and starvation-induced autophagy. Involved in correct ATG9 trafficking to the pre-autophagosomal structure. Might also be involved in premeiotic DNA replication. This is Autophagy-related protein 18 (ATG18) from Eremothecium gossypii (strain ATCC 10895 / CBS 109.51 / FGSC 9923 / NRRL Y-1056) (Yeast).